The primary structure comprises 195 residues: U8 snoRNA-decapping enzyme (195 aa).

In terms of domain architecture, Nudix hydrolase spans 18–173 (DWRHACHALL…IGAAREQLLE (156 aa)). Substrate contacts are provided by histidine 24, arginine 50, and phenylalanine 57. Mn(2+) is bound by residues glycine 59, glutamate 76, glutamate 80, and histidine 99. The short motif at 61–82 (FVDAQDSCLEDGLNRELREELG) is the Nudix box element. Glutamine 170 serves as a coordination point for substrate. Residue glutamate 173 coordinates Mn(2+).

This sequence belongs to the Nudix hydrolase family. NUDT16 subfamily. As to quaternary structure, homodimer. Mg(2+) is required as a cofactor. The cofactor is Mn(2+). Co(2+) serves as cofactor. Expressed in brain, testis, spleen, lung, heart, liver, kidney and muscle (at protein level).

Its subcellular location is the nucleus. The protein resides in the nucleolus. It is found in the nucleoplasm. The protein localises to the cytoplasm. The enzyme catalyses a 5'-end (N(7)-methyl 5'-triphosphoguanosine)-ribonucleoside in mRNA + H2O = N(7)-methyl-GDP + a 5'-end phospho-ribonucleoside in mRNA + 2 H(+). It carries out the reaction IDP + H2O = IMP + phosphate + H(+). The catalysed reaction is dIDP + H2O = dIMP + phosphate + H(+). It catalyses the reaction a 5'-end NAD(+)-phospho-ribonucleoside in mRNA + H2O = a 5'-end phospho-ribonucleoside in mRNA + NAD(+) + H(+). The enzyme catalyses a 5'-end FAD-phospho-ribonucleoside in mRNA + H2O = a 5'-end phospho-adenosine-phospho-ribonucleoside in mRNA + FMN + 2 H(+). It carries out the reaction a 5'-end CoA-ribonucleoside in mRNA + H2O = a 5'-end phospho-adenosine-phospho-ribonucleoside in mRNA + (R)-4'-phosphopantetheine + 2 H(+). Its function is as follows. RNA-binding and decapping enzyme that catalyzes the cleavage of the cap structure of snoRNAs and mRNAs in a metal-dependent manner. Part of the U8 snoRNP complex that is required for the accumulation of mature 5.8S and 28S rRNA. Has diphosphatase activity and removes m7G and/or m227G caps from U8 snoRNA and leaves a 5'monophosphate on the RNA. Also catalyzes the cleavage of the cap structure on mRNAs. Does not hydrolyze cap analog structures like 7-methylguanosine nucleoside triphosphate (m7GpppG). Also hydrolysis m7G- and m227G U3-capped RNAs but with less efficiencies. Has broad substrate specificity with manganese or cobalt as cofactor and can act on various RNA species. Binds to the U8 snoRNA; metal is not required for RNA-binding. May play a role in the regulation of snoRNAs and mRNAs degradation. Also acts as a phosphatase; hydrolyzes the non-canonical purine nucleotides inosine diphosphate (IDP) and deoxyinosine diphosphate (dITP) as well as guanosine diphosphate (GDP), deoxyguanosine diphosphate (dGDP), xanthine diphosphate (XDP), inosine triphosphate (ITP) and deoxyinosine triphosphate (ITP) to their respective monophosphate derivatives and does not distinguish between the deoxy- and ribose forms. The order of activity with different substrates is IDP &gt; dIDP &gt;&gt; GDP = dGDP &gt; XDP = ITP = dITP. Binds strongly to GTP, ITP and XTP. Participates in the hydrolysis of dIDP/IDP and probably excludes non-canonical purines from RNA and DNA precursor pools, thus preventing their incorporation into RNA and DNA and avoiding chromosomal lesions. Exhibits decapping activity towards NAD-capped RNAs and FAD-capped RNAs. Exhibits decapping activity towards dpCoA-capped RNAs in vitro. The chain is U8 snoRNA-decapping enzyme (Nudt16) from Mus musculus (Mouse).